The following is a 325-amino-acid chain: Post-GPI attachment to proteins factor 2-like (325 aa).

Transmembrane regions (helical) follow at residues 80-100, 130-150, 171-191, 205-225, 243-263, and 276-296; these read VVTA…AYVF, YFWR…AFVY, LLIT…GGVT, IFIT…KLNG, WKKI…VFFA, and WFAF…FTII.

It belongs to the PGAP2 family.

It localises to the membrane. This is Post-GPI attachment to proteins factor 2-like from Drosophila melanogaster (Fruit fly).